An 898-amino-acid polypeptide reads, in one-letter code: Serine/threonine-protein kinase TAO3 (898 aa).

The 254-residue stretch at 24–277 (FIDLHEIGHG…AAELLRHDFI (254 aa)) folds into the Protein kinase domain. ATP contacts are provided by residues 30–38 (IGHGSFGAV) and Lys-53. Asp-147 (proton acceptor) is an active-site residue. Disordered stretches follow at residues 316–372 (TRNG…EVMD) and 405–424 (DEAG…SVQS). Phosphoserine is present on residues Ser-324, Ser-331, Ser-343, Ser-346, and Ser-349. Residues 349-366 (SIPSVSVSTGSRSSSVNS) show a composition bias toward low complexity. Residue Thr-357 is modified to Phosphothreonine. Phosphoserine is present on Ser-359. Residues 405-416 (DEAGHGDPRPEP) are compositionally biased toward basic and acidic residues. A Phosphoserine modification is found at Ser-442. Coiled coils occupy residues 452–502 (EQEN…THAN), 548–649 (FLES…HAML), and 753–871 (ILKT…QERE). The interval 565 to 596 (EEMNEDHSTPKKEKQERISKHKENLQHTQAEE) is disordered. Residue Lys-830 is modified to N6-acetyllysine.

This sequence belongs to the protein kinase superfamily. STE Ser/Thr protein kinase family. STE20 subfamily. In terms of assembly, self-associates. Interacts with ERN1 and TRAF2. Interaction with TRAF2 is facilitated under ER stress conditions, such as treatment with tunicamycin, and may promote TRAF2 phosphorylation. Interacts (via N-terminus) with STK25; the interaction promotes STK25 abundance at the level of protein expression and/or stability. In terms of processing, autophosphorylated. Phosphorylation at Ser-324 by ATM following DNA damage is required for activation of the p38/MAPK14 stress-activated MAPK cascade. Phosphorylated at Ser-324 and on Tyr residues during T cell activation. Phosphorylated by LRRK2. Ubiquitously expressed, with a higher expression in the retina.

It localises to the cytoplasm. The protein resides in the cell membrane. Its subcellular location is the membrane raft. It is found in the lipid droplet. It carries out the reaction L-seryl-[protein] + ATP = O-phospho-L-seryl-[protein] + ADP + H(+). The catalysed reaction is L-threonyl-[protein] + ATP = O-phospho-L-threonyl-[protein] + ADP + H(+). In terms of biological role, serine/threonine-protein kinase that acts as a regulator of the p38/MAPK14 stress-activated MAPK cascade and of the MAPK8/JNK cascade. In response to DNA damage, involved in the G2/M transition DNA damage checkpoint by activating the p38/MAPK14 stress-activated MAPK cascade, probably by mediating phosphorylation of upstream MAP2K3 and MAP2K6 kinases. Inhibits basal activity of the MAPK8/JNK cascade and diminishes its activation in response to epidermal growth factor (EGF). Positively regulates canonical T cell receptor (TCR) signaling by preventing early PTPN6/SHP1-mediated inactivation of LCK, ensuring sustained TCR signaling that is required for optimal activation and differentiation of T cells. Phosphorylates PTPN6/SHP1 on 'Thr-396', leading to its polyubiquitination and subsequent proteasomal degradation. Required for cell surface expression of metalloprotease ADAM10 on type 1 transitional B cells which is necessary for their NOTCH-mediated development into marginal zone B cells. Also required for the NOTCH-mediated terminal differentiation of splenic conventional type 2 dendritic cells. Positively regulates osteoblast differentiation by acting as an upstream activator of the JNK pathway. Promotes JNK signaling in hepatocytes and positively regulates hepatocyte lipid storage by inhibiting beta-oxidation and triacylglycerol secretion while enhancing lipid synthesis. Restricts age-associated inflammation by negatively regulating differentiation of macrophages and their production of pro-inflammatory cytokines. Plays a role in negatively regulating the abundance of regulatory T cells in white adipose tissue. The polypeptide is Serine/threonine-protein kinase TAO3 (Taok3) (Rattus norvegicus (Rat)).